Reading from the N-terminus, the 145-residue chain is uncharacterized protein (145 aa).

Residues 78 to 145 (KLQIVAKDRI…DVVEKISILW (68 aa)) form the ACT domain.

This is an uncharacterized protein from Methanocaldococcus jannaschii (strain ATCC 43067 / DSM 2661 / JAL-1 / JCM 10045 / NBRC 100440) (Methanococcus jannaschii).